A 225-amino-acid chain; its full sequence is Red fluorescent protein drFP583 (225 aa).

Residues 66-68 constitute a cross-link (2-iminomethyl-5-imidazolinone (Gln-Gly)); sequence QYG. Position 67 is a (Z)-2,3-didehydrotyrosine (Y67).

It belongs to the GFP family. In terms of assembly, homotetramer. Post-translationally, contains a chromophore consisting of modified amino acid residues. The chromophore is formed by autocatalytic backbone condensation between Xaa-N and Gly-(N+2), oxidation of Tyr-(N+1) to didehydrotyrosine, and formation of a double bond to the alpha-amino nitrogen of residue Xaa-N. Maturation of the chromophore requires nothing other than molecular oxygen.

Its function is as follows. Thought to play a role in photoprotection of the coral's resident symbiont microalgae's photosystems from photoinhibition caused by high light levels found near the surface of coral reefs. In deeper water, the fluorescence may be to convert blue light into longer wavelengths more suitable for use in photosynthesis by the microalgal symbionts. The sequence is that of Red fluorescent protein drFP583 from Discosoma sp. (Sea anemone).